A 204-amino-acid polypeptide reads, in one-letter code: Octanoyltransferase (204 aa).

One can recognise a BPL/LPL catalytic domain in the interval 27 to 204 (KNTKDELWIV…LINYVSRNRH (178 aa)). Substrate is bound by residues 66–73 (RGGQVTYH), 133–135 (ALG), and 146–148 (GLS). The active-site Acyl-thioester intermediate is C164.

Belongs to the LipB family.

The protein localises to the cytoplasm. It catalyses the reaction octanoyl-[ACP] + L-lysyl-[protein] = N(6)-octanoyl-L-lysyl-[protein] + holo-[ACP] + H(+). It participates in protein modification; protein lipoylation via endogenous pathway; protein N(6)-(lipoyl)lysine from octanoyl-[acyl-carrier-protein]: step 1/2. In terms of biological role, catalyzes the transfer of endogenously produced octanoic acid from octanoyl-acyl-carrier-protein onto the lipoyl domains of lipoate-dependent enzymes. Lipoyl-ACP can also act as a substrate although octanoyl-ACP is likely to be the physiological substrate. In Vesicomyosocius okutanii subsp. Calyptogena okutanii (strain HA), this protein is Octanoyltransferase.